A 120-amino-acid chain; its full sequence is Large ribosomal subunit protein uL18 (120 aa).

The protein belongs to the universal ribosomal protein uL18 family. As to quaternary structure, part of the 50S ribosomal subunit. Part of the 5S rRNA/L5/L18/L25 subcomplex. Contacts the 23S rRNA and 5S rRNA. Required for catalysis of RNase M5.

This is one of the proteins that bind and probably mediate the attachment of the 5S RNA into the large ribosomal subunit, where it forms part of the central protuberance. Functionally, required for correct processing of both the 5' and 3' ends of 5S rRNA precursor, which is does in conjunction with ribonuclease M5 (RNase M5, rnmV). Possibly folds the 5S rRNA precursor into the correct conformation, thus acting as a chaperone. This is Large ribosomal subunit protein uL18 from Bacillus subtilis (strain 168).